Reading from the N-terminus, the 354-residue chain is Biotin synthase (354 aa).

The Radical SAM core domain maps to 41 to 268 (NEVQISRLLS…LSRVRLSAGR (228 aa)). [4Fe-4S] cluster-binding residues include Cys-56, Cys-60, and Cys-63. [2Fe-2S] cluster is bound by residues Cys-100, Cys-131, Cys-191, and Arg-263.

The protein belongs to the radical SAM superfamily. Biotin synthase family. As to quaternary structure, homodimer. Requires [4Fe-4S] cluster as cofactor. [2Fe-2S] cluster serves as cofactor.

The enzyme catalyses (4R,5S)-dethiobiotin + (sulfur carrier)-SH + 2 reduced [2Fe-2S]-[ferredoxin] + 2 S-adenosyl-L-methionine = (sulfur carrier)-H + biotin + 2 5'-deoxyadenosine + 2 L-methionine + 2 oxidized [2Fe-2S]-[ferredoxin]. Its pathway is cofactor biosynthesis; biotin biosynthesis; biotin from 7,8-diaminononanoate: step 2/2. Catalyzes the conversion of dethiobiotin (DTB) to biotin by the insertion of a sulfur atom into dethiobiotin via a radical-based mechanism. This is Biotin synthase from Shewanella amazonensis (strain ATCC BAA-1098 / SB2B).